The following is an 846-amino-acid chain: Translation initiation factor IF-2 (846 aa).

The tract at residues Lys199 to Lys219 is disordered. Basic residues predominate over residues Ser207–Lys219. The tr-type G domain maps to Ser345–Glu512. Residues Gly354 to Thr361 form a G1 region. A GTP-binding site is contributed by Gly354 to Thr361. The segment at Gly379–His383 is G2. The interval Asp400–Gly403 is G3. Residues Asp400 to His404 and Asn454 to Asp457 contribute to the GTP site. The segment at Asn454–Asp457 is G4. The G5 stretch occupies residues Ser490–Lys492.

It belongs to the TRAFAC class translation factor GTPase superfamily. Classic translation factor GTPase family. IF-2 subfamily.

It localises to the cytoplasm. One of the essential components for the initiation of protein synthesis. Protects formylmethionyl-tRNA from spontaneous hydrolysis and promotes its binding to the 30S ribosomal subunits. Also involved in the hydrolysis of GTP during the formation of the 70S ribosomal complex. This chain is Translation initiation factor IF-2, found in Francisella tularensis subsp. holarctica (strain LVS).